We begin with the raw amino-acid sequence, 351 residues long: Transcription factor Atoh1 (351 aa).

2 disordered regions span residues 16-39 (LGDH…PATL) and 89-116 (EAAA…SKSP). Positions 26–36 (HHVPPLTPQPP) are enriched in pro residues. The bHLH domain maps to 156–208 (QRRLAANARERRRMHGLNHAFDQLRNVIPSFNNDKKLSKYETLQMAQIYINAL). 2 disordered regions span residues 244–278 (GAGA…GPAS) and 308–351 (LSPS…DEAS). The segment covering 247-256 (ASAVAGAQPA) has biased composition (low complexity). Residues 258–268 (GGGPRPTPPGP) show a composition bias toward pro residues. The segment covering 332–351 (HRSDGEFSPHSHYSDSDEAS) has biased composition (basic and acidic residues).

As to quaternary structure, efficient DNA binding requires dimerization with another bHLH protein. As to expression, developing nervous system, and in adult epithelial cells of the gastrointestinal tract.

The protein localises to the nucleus. Functionally, transcriptional regulator. Activates E box-dependent transcription in collaboration with TCF3/E47, but the activity is completely antagonized by the negative regulator of neurogenesis HES1. Plays a role in the differentiation of subsets of neural cells by activating E box-dependent transcription. The protein is Transcription factor Atoh1 of Mus musculus (Mouse).